A 258-amino-acid chain; its full sequence is NAD kinase (258 aa).

Asp-45 functions as the Proton acceptor in the catalytic mechanism. Residues 45–46 (DG), 117–118 (NE), Asp-147, Ala-155, 158–163 (TAYNYS), and Ala-182 contribute to the NAD(+) site.

This sequence belongs to the NAD kinase family. It depends on a divalent metal cation as a cofactor.

Its subcellular location is the cytoplasm. The catalysed reaction is NAD(+) + ATP = ADP + NADP(+) + H(+). Functionally, involved in the regulation of the intracellular balance of NAD and NADP, and is a key enzyme in the biosynthesis of NADP. Catalyzes specifically the phosphorylation on 2'-hydroxyl of the adenosine moiety of NAD to yield NADP. This chain is NAD kinase, found in Xanthomonas campestris pv. campestris (strain 8004).